A 506-amino-acid chain; its full sequence is Heat stress transcription factor A-1 (506 aa).

The stretch at 157-207 (MEEEIEMLKRDKNVLMQELVRLRQQQQTTDHQLQTLGKRLQGMEQRQQQMM) forms a coiled coil. Residues 164-214 (LKRDKNVLMQELVRLRQQQQTTDHQLQTLGKRLQGMEQRQQQMMSFLAKAM) form a hydrophobic repeat HR-A/B region. Residues 231–254 (RRRIVASNKKRRLPKQDGSLDSES) form a disordered region. Positions 232–243 (RRIVASNKKRRL) are enriched in basic residues. Residues 239-242 (KKRR) carry the Nuclear localization signal motif. The AHA signature appears at 449-456 (DSFWEQFL).

Belongs to the HSF family. Class A subfamily. Homotrimer. In terms of processing, exhibits temperature-dependent phosphorylation.

It is found in the nucleus. Its function is as follows. Transcriptional regulator that specifically binds DNA of heat shock promoter elements (HSE). This is Heat stress transcription factor A-1 (HSFA1) from Oryza sativa subsp. japonica (Rice).